The following is a 398-amino-acid chain: NADH-ubiquinone oxidoreductase 49 kDa subunit (398 aa).

It belongs to the complex I 49 kDa subunit family.

Its subcellular location is the mitochondrion. It carries out the reaction a ubiquinone + NADH + 5 H(+)(in) = a ubiquinol + NAD(+) + 4 H(+)(out). Core subunit of the mitochondrial membrane respiratory chain NADH dehydrogenase (Complex I) that is believed to belong to the minimal assembly required for catalysis. Complex I functions in the transfer of electrons from NADH to the respiratory chain. The immediate electron acceptor for the enzyme is believed to be ubiquinone. Component of the iron-sulfur (IP) fragment of the enzyme. Component of the iron-sulfur (IP) fragment of the enzyme. This Pylaiella littoralis (Seaweed) protein is NADH-ubiquinone oxidoreductase 49 kDa subunit (NAD7).